Consider the following 142-residue polypeptide: MAP3K7 C-terminal-like protein (142 aa).

Ubiquitous.

This Mus musculus (Mouse) protein is MAP3K7 C-terminal-like protein (Map3k7cl).